The chain runs to 216 residues: Cytidylate kinase (216 aa).

9 to 17 lines the ATP pocket; sequence GPAASGKGT.

The protein belongs to the cytidylate kinase family. Type 1 subfamily.

It is found in the cytoplasm. The catalysed reaction is CMP + ATP = CDP + ADP. The enzyme catalyses dCMP + ATP = dCDP + ADP. The protein is Cytidylate kinase of Caulobacter sp. (strain K31).